Consider the following 391-residue polypeptide: Oxytocin receptor (391 aa).

At 1-38 (MEGAFAANWSAEAVNGSAAPPGTEGNRTAGPPQRNEAL) the chain is on the extracellular side. Residues N8, N15, and N26 are each glycosylated (N-linked (GlcNAc...) asparagine). Residues 39–63 (ARVEVAVLCLILFLALSGNACVLLA) traverse the membrane as a helical segment. Residues 64-74 (LRTTRHKHSRL) are Cytoplasmic-facing. A helical membrane pass occupies residues 75-97 (FFFMKHLSIADLVVAVFQVLPQL). Residues 98-113 (LWDITFRFYGPDLLCR) are Extracellular-facing. Residues C112 and C187 are joined by a disulfide bond. The helical transmembrane segment at 114–135 (LVKYLQVVGMFASTYLLLLMSL) threads the bilayer. At 136–154 (DRCLAICQPLRSLSRRTDR) the chain is on the cytoplasmic side. Residues 155–175 (LAVLVTWLGCLVASAPQVHIF) traverse the membrane as a helical segment. Residues 176-202 (SLREVADGVFDCWAVFIQPWGPKAYIT) are Extracellular-facing. Residues 203–225 (WITLAVYIVPVIVLATCYGLISF) form a helical membrane-spanning segment. Topologically, residues 226–277 (KIWQNLRLKTAAAAAEAAAGAEGEAADWAGRAILARVSNVKLISKAKIRTVK) are cytoplasmic. The chain crosses the membrane as a helical span at residues 278–296 (MTFIVVLAFIVCWTPFFFV). Residues 297-311 (QMWSVWDADAPKEAS) are Extracellular-facing. A helical membrane pass occupies residues 312–334 (PFIIAMLLASLNSCCNPWIYMLF). Residues 335 to 391 (TGHLFQELVQRFLCCSFRRLKGSRPGETSVSKKSNSSTFVLSQYSSSQRRCSQPSTL) are Cytoplasmic-facing. S368 and S370 each carry phosphoserine.

The protein belongs to the G-protein coupled receptor 1 family. Vasopressin/oxytocin receptor subfamily.

Its subcellular location is the cell membrane. In terms of biological role, receptor for oxytocin. The activity of this receptor is mediated by G proteins which activate a phosphatidylinositol-calcium second messenger system. The chain is Oxytocin receptor (OXTR) from Bos taurus (Bovine).